A 241-amino-acid chain; its full sequence is MKKHIFEDARAIAAFLVSVFDSRLKTQEILWLALSGGSTPREIFRTWAHEFRHHLDWKRLRFFWSDERCVPPTDAQSNFNMTHSALLEPLEINPDAVFRVRGEDAPESACAAYSQEIEARLPRQRGVPCFDIILLGMGADGHTASIFPHEIELWDHSGCCVVATHPDTGQKRVSFTGHLINNAHEIYVVVTGREKQDMLASVASDPHASVPLHAWTLPKRSGCWIPLLRGLYPRKQCKPTV.

It belongs to the glucosamine/galactosamine-6-phosphate isomerase family. 6-phosphogluconolactonase subfamily.

The catalysed reaction is 6-phospho-D-glucono-1,5-lactone + H2O = 6-phospho-D-gluconate + H(+). The protein operates within carbohydrate degradation; pentose phosphate pathway; D-ribulose 5-phosphate from D-glucose 6-phosphate (oxidative stage): step 2/3. Functionally, hydrolysis of 6-phosphogluconolactone to 6-phosphogluconate. In Treponema pallidum (strain Nichols), this protein is 6-phosphogluconolactonase (pgl).